Reading from the N-terminus, the 348-residue chain is LRP2-binding protein (348 aa).

Residues 60–93 (TLAYFLRGQLYFEEGWYEEALEQFEEIEEKDHQA) form a TPR repeat. 6 Sel1-like repeats span residues 94 to 126 (TYQL…DSPC), 134 to 169 (FAAA…DNGN), 174 to 207 (VKAQ…GNGN), 208 to 243 (LESQ…ERGN), 244 to 278 (VYAQ…EVHD), and 298 to 333 (AMAS…RLNP).

As to quaternary structure, interacts with LRP2.

The protein resides in the cytoplasm. Functionally, may act as an adapter that regulates LRP2 function. The sequence is that of LRP2-binding protein (LRP2BP) from Macaca fascicularis (Crab-eating macaque).